Consider the following 660-residue polypeptide: Bifunctional polymyxin resistance protein ArnA (660 aa).

Positions 1-304 (MKAIVFAYHD…EMGIVTDVRL (304 aa)) are formyltransferase ArnAFT. Residue His104 is the Proton donor; for formyltransferase activity of the active site. (6R)-10-formyltetrahydrofolate contacts are provided by residues Arg114 and 136–140 (VKRPD). The tract at residues 314-660 (RRTRVLILGV…RTTVQEGDGA (347 aa)) is dehydrogenase ArnADH. NAD(+) contacts are provided by residues Asp347 and 368-369 (DI). UDP-alpha-D-glucuronate-binding positions include Ala393, Tyr398, and 432 to 433 (TS). Residue Glu434 is the Proton acceptor; for decarboxylase activity of the active site. Residues Arg460, Asn492, 526-535 (KLMDGGAQKR), and Tyr613 each bind UDP-alpha-D-glucuronate. Catalysis depends on Arg619, which acts as the Proton donor; for decarboxylase activity.

This sequence in the N-terminal section; belongs to the Fmt family. UDP-L-Ara4N formyltransferase subfamily. The protein in the C-terminal section; belongs to the NAD(P)-dependent epimerase/dehydratase family. UDP-glucuronic acid decarboxylase subfamily. In terms of assembly, homohexamer, formed by a dimer of trimers.

The enzyme catalyses UDP-alpha-D-glucuronate + NAD(+) = UDP-beta-L-threo-pentopyranos-4-ulose + CO2 + NADH. It catalyses the reaction UDP-4-amino-4-deoxy-beta-L-arabinose + (6R)-10-formyltetrahydrofolate = UDP-4-deoxy-4-formamido-beta-L-arabinose + (6S)-5,6,7,8-tetrahydrofolate + H(+). Its pathway is nucleotide-sugar biosynthesis; UDP-4-deoxy-4-formamido-beta-L-arabinose biosynthesis; UDP-4-deoxy-4-formamido-beta-L-arabinose from UDP-alpha-D-glucuronate: step 1/3. It participates in nucleotide-sugar biosynthesis; UDP-4-deoxy-4-formamido-beta-L-arabinose biosynthesis; UDP-4-deoxy-4-formamido-beta-L-arabinose from UDP-alpha-D-glucuronate: step 3/3. The protein operates within bacterial outer membrane biogenesis; lipopolysaccharide biosynthesis. Bifunctional enzyme that catalyzes the oxidative decarboxylation of UDP-glucuronic acid (UDP-GlcUA) to UDP-4-keto-arabinose (UDP-Ara4O) and the addition of a formyl group to UDP-4-amino-4-deoxy-L-arabinose (UDP-L-Ara4N) to form UDP-L-4-formamido-arabinose (UDP-L-Ara4FN). The modified arabinose is attached to lipid A and is required for resistance to polymyxin and cationic antimicrobial peptides. In Serratia proteamaculans (strain 568), this protein is Bifunctional polymyxin resistance protein ArnA.